The following is a 171-amino-acid chain: Large ribosomal subunit protein uL10 (171 aa).

The protein belongs to the universal ribosomal protein uL10 family. In terms of assembly, part of the ribosomal stalk of the 50S ribosomal subunit. The N-terminus interacts with L11 and the large rRNA to form the base of the stalk. The C-terminus forms an elongated spine to which L12 dimers bind in a sequential fashion forming a multimeric L10(L12)X complex.

Its function is as follows. Forms part of the ribosomal stalk, playing a central role in the interaction of the ribosome with GTP-bound translation factors. The polypeptide is Large ribosomal subunit protein uL10 (Cereibacter sphaeroides (strain ATCC 17023 / DSM 158 / JCM 6121 / CCUG 31486 / LMG 2827 / NBRC 12203 / NCIMB 8253 / ATH 2.4.1.) (Rhodobacter sphaeroides)).